The following is a 343-amino-acid chain: Methylthioribose-1-phosphate isomerase (343 aa).

Residues 48–50 (RGA), arginine 88, and glutamine 193 contribute to the substrate site. Aspartate 234 functions as the Proton donor in the catalytic mechanism. 244–245 (NK) provides a ligand contact to substrate.

This sequence belongs to the eIF-2B alpha/beta/delta subunits family. MtnA subfamily.

The enzyme catalyses 5-(methylsulfanyl)-alpha-D-ribose 1-phosphate = 5-(methylsulfanyl)-D-ribulose 1-phosphate. Its pathway is amino-acid biosynthesis; L-methionine biosynthesis via salvage pathway; L-methionine from S-methyl-5-thio-alpha-D-ribose 1-phosphate: step 1/6. Catalyzes the interconversion of methylthioribose-1-phosphate (MTR-1-P) into methylthioribulose-1-phosphate (MTRu-1-P). This is Methylthioribose-1-phosphate isomerase from Thermotoga maritima (strain ATCC 43589 / DSM 3109 / JCM 10099 / NBRC 100826 / MSB8).